A 296-amino-acid chain; its full sequence is Thioredoxin-related transmembrane protein 2 (296 aa).

Positions 1 to 48 (MAVLAPLIALVYSVPRLSRWLARPYYFLSALLSAAFLLVRKLPPVCES) are cleaved as a signal peptide. The Extracellular portion of the chain corresponds to 49–102 (LPTQREDGNPCDFDWREVEILMFLSAIVMMKNRRSITVEQHVGNIFMFSKVANA). The chain crosses the membrane as a helical span at residues 103–125 (ILFFRLDIRMGLLYITLCIVFLM). Over 126–296 (TCKPPLYMGP…VPDEESKKDK (171 aa)) the chain is Cytoplasmic. The Thioredoxin domain occupies 132–269 (YMGPEYIKYF…LYQRAKKLSK (138 aa)). 2 positions are modified to phosphoserine: Ser211 and Ser243. The segment at 272–296 (DKIPEEQPVAAVPAAVPDEESKKDK) is disordered. Positions 277–287 (EQPVAAVPAAV) are enriched in low complexity. The Di-lysine motif motif lies at 293–296 (KKDK).

In terms of assembly, monomer. Homodimer; disulfide-linked. Occurs in both reduced and oxidized monomeric form. Oxidative conditions increase homodimerization. Interacts with CANX. Interacts with ATP2A2.

Its subcellular location is the endoplasmic reticulum membrane. The protein resides in the mitochondrion membrane. Functionally, endoplasmic reticulum and mitochondria-associated protein that probably functions as a regulator of cellular redox state and thereby regulates protein post-translational modification, protein folding and mitochondrial activity. Indirectly regulates neuronal proliferation, migration, and organization in the developing brain. The protein is Thioredoxin-related transmembrane protein 2 (TMX2) of Bos taurus (Bovine).